Reading from the N-terminus, the 381-residue chain is Alkanesulfonate monooxygenase (381 aa).

This sequence belongs to the SsuD family. Homotetramer.

The enzyme catalyses an alkanesulfonate + FMNH2 + O2 = an aldehyde + FMN + sulfite + H2O + 2 H(+). Its function is as follows. Catalyzes the desulfonation of aliphatic sulfonates. The sequence is that of Alkanesulfonate monooxygenase from Citrobacter koseri (strain ATCC BAA-895 / CDC 4225-83 / SGSC4696).